The following is a 494-amino-acid chain: Probable cytosol aminopeptidase (494 aa).

Mn(2+) is bound by residues Lys260 and Asp265. Residue Lys272 is part of the active site. The Mn(2+) site is built by Asp283, Asp342, and Glu344. Arg346 is a catalytic residue.

This sequence belongs to the peptidase M17 family. The cofactor is Mn(2+).

The protein localises to the cytoplasm. It catalyses the reaction Release of an N-terminal amino acid, Xaa-|-Yaa-, in which Xaa is preferably Leu, but may be other amino acids including Pro although not Arg or Lys, and Yaa may be Pro. Amino acid amides and methyl esters are also readily hydrolyzed, but rates on arylamides are exceedingly low.. It carries out the reaction Release of an N-terminal amino acid, preferentially leucine, but not glutamic or aspartic acids.. In terms of biological role, presumably involved in the processing and regular turnover of intracellular proteins. Catalyzes the removal of unsubstituted N-terminal amino acids from various peptides. The polypeptide is Probable cytosol aminopeptidase (Bacillus cereus (strain B4264)).